A 913-amino-acid polypeptide reads, in one-letter code: Isoleucine--tRNA ligase (913 aa).

The short motif at 57 to 67 (PYANGDIHLGT) is the 'HIGH' region element. Position 549 (Glu-549) interacts with L-isoleucyl-5'-AMP. Residues 590-594 (KMSKS) carry the 'KMSKS' region motif. Lys-593 is an ATP binding site. Cys-881, Cys-884, Cys-901, and Cys-904 together coordinate Zn(2+).

This sequence belongs to the class-I aminoacyl-tRNA synthetase family. IleS type 1 subfamily. Monomer. Zn(2+) serves as cofactor.

It localises to the cytoplasm. It carries out the reaction tRNA(Ile) + L-isoleucine + ATP = L-isoleucyl-tRNA(Ile) + AMP + diphosphate. In terms of biological role, catalyzes the attachment of isoleucine to tRNA(Ile). As IleRS can inadvertently accommodate and process structurally similar amino acids such as valine, to avoid such errors it has two additional distinct tRNA(Ile)-dependent editing activities. One activity is designated as 'pretransfer' editing and involves the hydrolysis of activated Val-AMP. The other activity is designated 'posttransfer' editing and involves deacylation of mischarged Val-tRNA(Ile). This is Isoleucine--tRNA ligase from Fervidobacterium nodosum (strain ATCC 35602 / DSM 5306 / Rt17-B1).